Consider the following 68-residue polypeptide: ATP synthase F(0) complex subunit 8 (68 aa).

Residues 8-24 form a helical membrane-spanning segment; it reads VWPTTITPMLLTLFLIT. The residue at position 54 (Lys-54) is an N6-acetyllysine; alternate. Lys-54 is modified (N6-succinyllysine; alternate). Lys-57 bears the N6-acetyllysine mark.

It belongs to the ATPase protein 8 family. As to quaternary structure, component of the ATP synthase complex composed at least of ATP5F1A/subunit alpha, ATP5F1B/subunit beta, ATP5MC1/subunit c (homooctomer), MT-ATP6/subunit a, MT-ATP8/subunit 8, ATP5ME/subunit e, ATP5MF/subunit f, ATP5MG/subunit g, ATP5MK/subunit k, ATP5MJ/subunit j, ATP5F1C/subunit gamma, ATP5F1D/subunit delta, ATP5F1E/subunit epsilon, ATP5PF/subunit F6, ATP5PB/subunit b, ATP5PD/subunit d, ATP5PO/subunit OSCP. ATP synthase complex consists of a soluble F(1) head domain (subunits alpha(3) and beta(3)) - the catalytic core - and a membrane F(0) domain - the membrane proton channel (subunits c, a, 8, e, f, g, k and j). These two domains are linked by a central stalk (subunits gamma, delta, and epsilon) rotating inside the F1 region and a stationary peripheral stalk (subunits F6, b, d, and OSCP). Interacts with PRICKLE3.

The protein resides in the mitochondrion membrane. In terms of biological role, subunit 8, of the mitochondrial membrane ATP synthase complex (F(1)F(0) ATP synthase or Complex V) that produces ATP from ADP in the presence of a proton gradient across the membrane which is generated by electron transport complexes of the respiratory chain. ATP synthase complex consist of a soluble F(1) head domain - the catalytic core - and a membrane F(1) domain - the membrane proton channel. These two domains are linked by a central stalk rotating inside the F(1) region and a stationary peripheral stalk. During catalysis, ATP synthesis in the catalytic domain of F(1) is coupled via a rotary mechanism of the central stalk subunits to proton translocation. In vivo, can only synthesize ATP although its ATP hydrolase activity can be activated artificially in vitro. Part of the complex F(0) domain. This Pan paniscus (Pygmy chimpanzee) protein is ATP synthase F(0) complex subunit 8.